A 331-amino-acid chain; its full sequence is Ketol-acid reductoisomerase (NADP(+)) (331 aa).

The 180-residue stretch at 2–181 (TKVYYEDAVK…GATRAGVIET (180 aa)) folds into the KARI N-terminal Rossmann domain. Residues 25 to 28 (YGSQ), R48, S52, and 82 to 85 (DETQ) contribute to the NADP(+) site. H107 is a catalytic residue. Position 133 (G133) interacts with NADP(+). Positions 182–327 (TFKEETETDL…AELREMMPFV (146 aa)) constitute a KARI C-terminal knotted domain. The Mg(2+) site is built by D190, E194, E226, and E230. S251 contacts substrate.

This sequence belongs to the ketol-acid reductoisomerase family. Mg(2+) serves as cofactor.

The catalysed reaction is (2R)-2,3-dihydroxy-3-methylbutanoate + NADP(+) = (2S)-2-acetolactate + NADPH + H(+). It carries out the reaction (2R,3R)-2,3-dihydroxy-3-methylpentanoate + NADP(+) = (S)-2-ethyl-2-hydroxy-3-oxobutanoate + NADPH + H(+). The protein operates within amino-acid biosynthesis; L-isoleucine biosynthesis; L-isoleucine from 2-oxobutanoate: step 2/4. Its pathway is amino-acid biosynthesis; L-valine biosynthesis; L-valine from pyruvate: step 2/4. Involved in the biosynthesis of branched-chain amino acids (BCAA). Catalyzes an alkyl-migration followed by a ketol-acid reduction of (S)-2-acetolactate (S2AL) to yield (R)-2,3-dihydroxy-isovalerate. In the isomerase reaction, S2AL is rearranged via a Mg-dependent methyl migration to produce 3-hydroxy-3-methyl-2-ketobutyrate (HMKB). In the reductase reaction, this 2-ketoacid undergoes a metal-dependent reduction by NADPH to yield (R)-2,3-dihydroxy-isovalerate. The polypeptide is Ketol-acid reductoisomerase (NADP(+)) (Listeria innocua serovar 6a (strain ATCC BAA-680 / CLIP 11262)).